Consider the following 293-residue polypeptide: Ribosomal protein L11 methyltransferase (293 aa).

Residues Thr-145, Gly-166, Asp-188, and Asn-230 each contribute to the S-adenosyl-L-methionine site.

The protein belongs to the methyltransferase superfamily. PrmA family.

It is found in the cytoplasm. The enzyme catalyses L-lysyl-[protein] + 3 S-adenosyl-L-methionine = N(6),N(6),N(6)-trimethyl-L-lysyl-[protein] + 3 S-adenosyl-L-homocysteine + 3 H(+). Methylates ribosomal protein L11. This is Ribosomal protein L11 methyltransferase from Haemophilus ducreyi (strain 35000HP / ATCC 700724).